A 512-amino-acid polypeptide reads, in one-letter code: Protein disulfide-isomerase (512 aa).

A signal peptide spans 1 to 24 (MAKNVAIFGLLFSLLLLVPSQIFA). The Thioredoxin 1 domain occupies 25-144 (EESSTDAKEF…IVEYLKKQSG (120 aa)). Active-site nucleophile residues include Cys-62 and Cys-65. Cys-62 and Cys-65 are oxidised to a cystine. N-linked (GlcNAc...) asparagine glycosylation is present at Asn-278. One can recognise a Thioredoxin 2 domain in the interval 357-485 (YKDGKVEPFV…IIEFIEKNKD (129 aa)). Catalysis depends on nucleophile residues Cys-407 and Cys-410. A disulfide bridge links Cys-407 with Cys-410. Basic and acidic residues predominate over residues 487–496 (TGAAHQEVEQ). The tract at residues 487-512 (TGAAHQEVEQPKAAAQPEAEQPKDEL) is disordered. The Prevents secretion from ER motif lies at 509–512 (KDEL).

This sequence belongs to the protein disulfide isomerase family.

It localises to the endoplasmic reticulum lumen. The enzyme catalyses Catalyzes the rearrangement of -S-S- bonds in proteins.. In terms of biological role, participates in the folding of proteins containing disulfide bonds, may be involved in glycosylation, prolyl hydroxylation and triglyceride transfer. The protein is Protein disulfide-isomerase (PDI) of Medicago sativa (Alfalfa).